Reading from the N-terminus, the 855-residue chain is Putative AAA family ATPase R476 (855 aa).

Over residues Met-1–Glu-13 the composition is skewed to basic and acidic residues. The tract at residues Met-1–His-37 is disordered. Low complexity predominate over residues Glu-17 to Val-27. Residue Gly-610–Thr-617 coordinates ATP.

It belongs to the AAA ATPase family.

This is Putative AAA family ATPase R476 from Acanthamoeba polyphaga mimivirus (APMV).